A 1468-amino-acid chain; its full sequence is ABC transporter G family member 34 (1468 aa).

The interval 33 to 53 (NGAFSRSSSSSSRRMRGEEDD) is disordered. Residues 178–450 (ANALGILPTR…FELMGFKCPE (273 aa)) form the ABC transporter 1 domain. Residue 211-218 (GPPGSGKT) coordinates ATP. One can recognise an ABC transmembrane type-2 1 domain in the interval 528–741 (ELLKANIDRE…AQNAVSVNEF (214 aa)). The next 6 membrane-spanning stretches (helical) occupy residues 546–566 (FVYIFRTIQLMTVSAMAMTVF), 575–595 (SVADGVIFMGALFFAVMMIML), 634–654 (SPMSFIEVGGFCFMSYYVIGF), 666–686 (LLMLAVSQMAAALFRFVGGAA), 690–710 (IVANVFGSFMLLIFMVLGGFI), and 778–798 (IGFGALLGFIMLFNILFTLAL). The ABC transporter 2 domain occupies 871-1123 (LTFEDIKYSV…ELIKYFEGIQ (253 aa)). 916-923 (GVSGAGKT) serves as a coordination point for ATP. The region spanning 1196–1410 (IQCLACLWKQ…TLYGLIVSQY (215 aa)) is the ABC transmembrane type-2 2 domain. Helical transmembrane passes span 1217–1237 (AIRLFFTTVIALIFGTIFWDL), 1247–1267 (LFNAMGSMYAAVLFIGVLNGQ), 1303–1323 (FPYTLVQSVIYSIIVYSMIGF), 1330–1350 (FFWYLFFMFFTLLYFTFYGMM), 1360–1380 (VASIVSSAFYAIWNLFTGFVI), 1387–1407 (VWWRWYCWICPVAWTLYGLIV), and 1440–1460 (FVAVVIVAFTMLFAFLFGFAI).

It belongs to the ABC transporter superfamily. ABCG family. PDR (TC 3.A.1.205) subfamily.

The protein localises to the membrane. May be a general defense protein. In Oryza sativa subsp. japonica (Rice), this protein is ABC transporter G family member 34.